The primary structure comprises 269 residues: Tungstate-binding protein TupA (269 aa).

The signal sequence occupies residues 1–17 (MKKIISLALALALSASA).

The complex is composed of two ATP-binding proteins (TupC), two transmembrane proteins (TupB) and a solute-binding protein (TupA).

It localises to the periplasm. In terms of biological role, part of an ABC transporter complex involved in ultra-high affinity tungstate uptake. Specifically binds tungstate. The protein is Tungstate-binding protein TupA of Campylobacter jejuni subsp. jejuni serotype O:2 (strain ATCC 700819 / NCTC 11168).